A 548-amino-acid chain; its full sequence is ATPase expression protein 2, mitochondrial (548 aa).

The N-terminal 27 residues, 1 to 27 (MRKQVIGINNIFHLARIRSIPVHCHCK), are a transit peptide targeting the mitochondrion.

Belongs to the AEP2 family. As to quaternary structure, binds to the 5'UTR of the OLI1 mRNA.

It localises to the mitochondrion. In terms of biological role, required for translation of the mitochondrial OLI1 transcript coding for the mitochondrial ATP synthase subunit 9. This is ATPase expression protein 2, mitochondrial (AEP2) from Candida glabrata (strain ATCC 2001 / BCRC 20586 / JCM 3761 / NBRC 0622 / NRRL Y-65 / CBS 138) (Yeast).